The following is a 155-amino-acid chain: Secreted RxLR effector protein RXLR-C301 (155 aa).

An N-terminal signal peptide occupies residues 1–24 (MRLYALSVSLLAAITLLACVIASA). Residues 34 to 64 (RRLSQDVSETEITELSESKKPTAQDIDNEER) carry the RxLR-dEER motif.

Belongs to the RxLR effector family.

It is found in the secreted. It localises to the host cell membrane. In terms of biological role, secreted effector that does not suppress pattern-triggered immunity (PTI) in plant host. In Plasmopara halstedii (Downy mildew of sunflower), this protein is Secreted RxLR effector protein RXLR-C301.